The chain runs to 164 residues: Cytochrome c-type biogenesis protein CcmE (164 aa).

Topologically, residues 1–8 (MNPRRKSR) are cytoplasmic. The chain crosses the membrane as a helical; Signal-anchor for type II membrane protein span at residues 9–29 (LYLAIVVLIGVALTATLMLYA). Topologically, residues 30-164 (LRSNIDLFYT…ATPQNEGAKS (135 aa)) are periplasmic. Heme contacts are provided by H130 and Y134. The segment covering 131-148 (DEKYTPPEVADAMKENHK) has biased composition (basic and acidic residues). Residues 131–164 (DEKYTPPEVADAMKENHKGPASAYATPQNEGAKS) are disordered. Over residues 155–164 (ATPQNEGAKS) the composition is skewed to polar residues.

The protein belongs to the CcmE/CycJ family.

Its subcellular location is the cell inner membrane. Functionally, heme chaperone required for the biogenesis of c-type cytochromes. Transiently binds heme delivered by CcmC and transfers the heme to apo-cytochromes in a process facilitated by CcmF and CcmH. This chain is Cytochrome c-type biogenesis protein CcmE, found in Serratia proteamaculans (strain 568).